Here is a 212-residue protein sequence, read N- to C-terminus: Endonuclease III (212 aa).

The region spanning 108–127 is the HhH domain; that stretch reads FKELVKLPGVGRKTANVVLN. Cys187, Cys194, Cys197, and Cys203 together coordinate [4Fe-4S] cluster.

This sequence belongs to the Nth/MutY family. It depends on [4Fe-4S] cluster as a cofactor.

The catalysed reaction is 2'-deoxyribonucleotide-(2'-deoxyribose 5'-phosphate)-2'-deoxyribonucleotide-DNA = a 3'-end 2'-deoxyribonucleotide-(2,3-dehydro-2,3-deoxyribose 5'-phosphate)-DNA + a 5'-end 5'-phospho-2'-deoxyribonucleoside-DNA + H(+). Its function is as follows. DNA repair enzyme that has both DNA N-glycosylase activity and AP-lyase activity. The DNA N-glycosylase activity releases various damaged pyrimidines from DNA by cleaving the N-glycosidic bond, leaving an AP (apurinic/apyrimidinic) site. The AP-lyase activity cleaves the phosphodiester bond 3' to the AP site by a beta-elimination, leaving a 3'-terminal unsaturated sugar and a product with a terminal 5'-phosphate. This is Endonuclease III from Rickettsia prowazekii (strain Madrid E).